The sequence spans 430 residues: CC-adding tRNA nucleotidyltransferase (430 aa).

33-36 provides a ligand contact to CTP; the sequence is GCVR. 2 residues coordinate Mg(2+): Asp46 and Asp48. CTP contacts are provided by residues 108 to 109, Asn113, 150 to 159, and Arg190; these read RD and DPLRIVRAYR.

This sequence belongs to the tRNA nucleotidyltransferase/poly(A) polymerase family. Requires Mg(2+) as cofactor.

It catalyses the reaction a tRNA precursor + 2 CTP = a tRNA with a 3' CC end + 2 diphosphate. TRNA nucleotidyltransferase involved in the synthesis of the tRNA CCA terminus. Adds the two cytidine residues to tRNA. The polypeptide is CC-adding tRNA nucleotidyltransferase (Geobacter sulfurreducens (strain ATCC 51573 / DSM 12127 / PCA)).